The sequence spans 3567 residues: Zinc finger homeobox protein 4 (3567 aa).

Met1 carries the post-translational modification N-acetylmethionine. 4 disordered regions span residues 1–54 (METC…LKTD), 425–480 (LSHS…AYSN), 522–545 (TSSSSATVSDDTEKKKQTAAVRAS), and 565–611 (SKDS…SPGS). The span at 9–28 (ISRQENGQSTSKLCGTTQLD) shows a compositional bias: polar residues. 2 stretches are compositionally biased toward basic and acidic residues: residues 39-54 (EPDRENSSTDDNLKTD) and 434-452 (KMSESKDQENNCERPKESN). The span at 468-480 (EPGDEDEEDAYSN) shows a compositional bias: acidic residues. 3 C2H2-type zinc fingers span residues 613–636 (IECPKCDTVLGSSRSLGGHMTMMH), 644–667 (LKCPKCNWHYKYQQTLEAHMKEKH), and 699–723 (FRCEVCNYSTTTKGNLSIHMQSDKH). A C2H2-type 4; degenerate zinc finger spans residues 767–789 (WRCEVCDYETNVARNLRIHMTSE). 3 consecutive C2H2-type zinc fingers follow at residues 917–941 (YQCKLCNYNTQLKANFQLHCKTDKH), 973–995 (LKCNACDYYTNSVDKLRLHTTNH), and 1021–1045 (YYCAVCDYTTKVKLNLVQHVRSVKH). The disordered stretch occupies residues 1098–1160 (EQHEEAEGAI…EDVATKRSKP (63 aa)). Composition is skewed to basic and acidic residues over residues 1120-1132 (TSERDNSEGKNSN) and 1148-1160 (AKEEDVATKRSKP). Lys1149 is covalently cross-linked (Glycyl lysine isopeptide (Lys-Gly) (interchain with G-Cter in SUMO2)). 2 consecutive C2H2-type zinc fingers follow at residues 1172 to 1195 (YQCPYCNYNSRDQSRIQMHVLSQH) and 1201 to 1224 (ICCPLCQDVLSNKMHLQLHLTHLH). A disordered region spans residues 1254-1324 (AASEKSERDT…WNKNSSKDVK (71 aa)). Residues 1281–1310 (MDDKSMAGLEDSKANVEVKNEEQKPTKEPL) are compositionally biased toward basic and acidic residues. Residues Lys1299 and Lys1324 each participate in a glycyl lysine isopeptide (Lys-Gly) (interchain with G-Cter in SUMO2) cross-link. C2H2-type zinc fingers lie at residues 1352 to 1374 (YRCNHCSLAFKTMQKLQIHSQYH) and 1380 to 1403 (TMCNLCQRSFRTFQALKKHLEAGH). A disordered region spans residues 1429 to 1480 (ETMSQDDHGLEQEMEREYEVDHEGKASPVGSDSSSIPDDMGSEPKRTLPFRK). Over residues 1433–1453 (QDDHGLEQEMEREYEVDHEGK) the composition is skewed to basic and acidic residues. The segment at 1496–1522 (YKCTVCKESFTQKNILLVHYNSVSHLH) adopts a C2H2-type 12 zinc-finger fold. Residue Lys1546 forms a Glycyl lysine isopeptide (Lys-Gly) (interchain with G-Cter in SUMO2) linkage. A C2H2-type 13 zinc finger spans residues 1548–1572 (YKCSICNVAYSQSSTLEIHMRSVLH). Low complexity-rich tracts occupy residues 1761–1772 (TQPQLQPQKQQQ) and 1779–1791 (QQQQQQASKLLKQ). Disordered regions lie at residues 1761-1791 (TQPQLQPQKQQQQPPPPQQQQQQQASKLLKQ) and 1809-1858 (SYKE…IASG). Lys1790 is covalently cross-linked (Glycyl lysine isopeptide (Lys-Gly) (interchain with G-Cter in SUMO2)). A compositionally biased stretch (basic and acidic residues) spans 1809–1845 (SYKEAEDISEKPEKPKQEFISEGEGLKEGKDTKKQKS). The C2H2-type 14 zinc finger occupies 1901 to 1924 (LECGTCGKLFSNVLILKSHQEHVH). Residues 1948-2024 (YPISPSSPET…PPSAPPQVQL (77 aa)) form a disordered region. Composition is skewed to pro residues over residues 1955-1974 (PETPPPPPPPPPLPPAPPQP) and 1991-2019 (QAPPPTPPPPPPPPPPPPPPPPPPPPSAP). 2 consecutive DNA-binding regions (homeobox) follow at residues 2084 to 2143 (FKRP…RQRN) and 2181 to 2240 (KRSS…RKSY). Residues 2267-2291 (YQCKKCNVVFPRIFDLITHQKKQCY) form a C2H2-type 15; degenerate zinc finger. Disordered regions lie at residues 2289–2311 (QCYKDEDDDAQDESQTEDSMDAT) and 2328–2431 (AKNA…SPLQ). Residues 2293–2309 (DEDDDAQDESQTEDSMD) show a composition bias toward acidic residues. The segment covering 2331 to 2345 (AAAPAASSGSGTSTP) has biased composition (low complexity). Residues 2352 to 2370 (PEPEKTSPKPEYPAEKPKQ) show a composition bias toward basic and acidic residues. Polar residues predominate over residues 2419-2431 (SASQTPVPSSPLQ). The C2H2-type 16 zinc-finger motif lies at 2448 to 2470 (YQCDQCTVAFPTLELWQEHQHMH). Over residues 2507-2530 (LGSSLTQMPPQASSSHTTAPTTVA) the composition is skewed to polar residues. The tract at residues 2507 to 2564 (LGSSLTQMPPQASSSHTTAPTTVAASLKRKLDDKEDNNCSEKEGGNSGEDQHRDKRLR) is disordered. The segment covering 2535–2559 (RKLDDKEDNNCSEKEGGNSGEDQHR) has biased composition (basic and acidic residues). The homeobox 3 DNA-binding region spans 2560-2619 (DKRLRTTITPEQLEILYEKYLLDSNPTRKMLDHIAREVGLKKRVVQVWFQNTRARERKGQ). The segment at 2630–2653 (KRCPFCRALFKAKSALESHIRSRH) adopts a C2H2-type 17 zinc-finger fold. Ser2663 carries the phosphoserine modification. Residues 2764-2785 (AISDATTGDEGNTEMESTTGSS) are compositionally biased toward polar residues. Disordered stretches follow at residues 2764–2811 (AISD…TTPT) and 2829–2885 (HFND…PGHK). The segment covering 2830-2839 (FNDKDGDHDQ) has biased composition (basic and acidic residues). The segment covering 2862 to 2874 (PSSPNPFGSSNPF) has biased composition (low complexity). The homeobox 4 DNA-binding region spans 2884–2943 (HKRFRTQMSNLQLKVLKACFSDYRTPTMQECEMLGNEIGLPKRVVQVWFQNARAKEKKFK). A C2H2-type 18 zinc finger spans residues 2962 to 2986 (PECTLCGVKYSARLSIRDHIFSKQH). Residues 3092-3110 (SATSSPALSLSSAPTKPLL) are compositionally biased toward low complexity. 2 disordered regions span residues 3092–3172 (SATS…KEEK) and 3281–3337 (LQKQ…LESK). Positions 3111-3125 (QTPPPPPPPPPPPPS) are enriched in pro residues. Positions 3126–3135 (SSLSGQQTEQ) are enriched in polar residues. Basic and acidic residues predominate over residues 3153-3172 (IKEEELEATKPEKHPKKEEK). A Glycyl lysine isopeptide (Lys-Gly) (interchain with G-Cter in SUMO2) cross-link involves residue Lys3154. A coiled-coil region spans residues 3265 to 3294 (ALLQQYQQYQQNLQESLQKQQKQQQEQQQK). Residues 3281–3293 (LQKQQKQQQEQQQ) are compositionally biased toward low complexity. Positions 3294-3314 (KPVQAKTSKVESDQPQNSNDA) are enriched in polar residues. Residues 3315-3337 (SETKEDKSTATESTKEEPQLESK) are compositionally biased toward basic and acidic residues. A C2H2-type 19; degenerate zinc finger spans residues 3354–3378 (FICRKCQMMFTDEDAAVNHQKSFCY). A C2H2-type 20 zinc finger spans residues 3398-3422 (YQCLACDVAISGNEALSQHLQSSLH). Disordered regions lie at residues 3443–3462 (HSVCSPNPNTTSTSQSAASS) and 3511–3534 (STSGVQTSLPTESCSDESDSELSQ). Low complexity predominate over residues 3447–3462 (SPNPNTTSTSQSAASS).

This sequence belongs to the krueppel C2H2-type zinc-finger protein family. In terms of tissue distribution, expressed in brain, skeletal muscle and liver. Very low expression in stomach.

It localises to the nucleus. May play a role in neural and muscle differentiation. May be involved in transcriptional regulation. The sequence is that of Zinc finger homeobox protein 4 (ZFHX4) from Homo sapiens (Human).